We begin with the raw amino-acid sequence, 507 residues long: Sugar transport protein 8 (507 aa).

Over 1–21 (MAVVISSNGNSKSFDAKMTVY) the chain is Cytoplasmic. The next 12 membrane-spanning stretches (helical) occupy residues 22–42 (VFIC…DIGI), 79–99 (FLQL…FFAS), 116–136 (IFFL…MLII), 139–159 (ILLG…LSEI), 166–186 (GGLN…ANIV), 200–220 (IALG…LLIC), 281–301 (FVIG…AIMF), 319–339 (LSAV…IFLV), 346–366 (FLLL…GIIL), 382–402 (LVVV…WGPL), 419–439 (GFAL…QAFL), and 448–468 (GIFF…LFFV). Residues 469-507 (PETKGVSIDDMRDSVWKLHWYWKRFMLEEDEHDVEKRTD) are Cytoplasmic-facing.

The protein belongs to the major facilitator superfamily. Sugar transporter (TC 2.A.1.1) family.

Its subcellular location is the membrane. Functionally, mediates an active uptake of hexoses, probably by sugar/hydrogen symport. This is Sugar transport protein 8 (STP8) from Arabidopsis thaliana (Mouse-ear cress).